The chain runs to 459 residues: Chromosomal replication initiator protein DnaA (459 aa).

A domain I, interacts with DnaA modulators region spans residues 1–74 (MQKIETFWYF…DEMAQGHFNE (74 aa)). The interval 74-122 (EKIHFKLELKDPAEIKTATIKAPEPKSKEDKKPPTDKAHGTTARKTNPS) is domain II. The segment at 91 to 123 (ATIKAPEPKSKEDKKPPTDKAHGTTARKTNPSR) is disordered. Residues 96–112 (PEPKSKEDKKPPTDKAH) are compositionally biased toward basic and acidic residues. Positions 123–339 (RLNPAFTFDA…GALKRVLAYS (217 aa)) are domain III, AAA+ region. Positions 167, 169, 170, and 171 each coordinate ATP. Residues 340 to 459 (RFTGHPISLD…YSTLIHILRG (120 aa)) are domain IV, binds dsDNA.

The protein belongs to the DnaA family. As to quaternary structure, oligomerizes as a right-handed, spiral filament on DNA at oriC.

It is found in the cytoplasm. Plays an essential role in the initiation and regulation of chromosomal replication. ATP-DnaA binds to the origin of replication (oriC) to initiate formation of the DNA replication initiation complex once per cell cycle. Binds the DnaA box (a 9 base pair repeat at the origin) and separates the double-stranded (ds)DNA. Forms a right-handed helical filament on oriC DNA; dsDNA binds to the exterior of the filament while single-stranded (ss)DNA is stabiized in the filament's interior. The ATP-DnaA-oriC complex binds and stabilizes one strand of the AT-rich DNA unwinding element (DUE), permitting loading of DNA polymerase. After initiation quickly degrades to an ADP-DnaA complex that is not apt for DNA replication. Binds acidic phospholipids. This chain is Chromosomal replication initiator protein DnaA, found in Nitrosomonas eutropha (strain DSM 101675 / C91 / Nm57).